Here is an 89-residue protein sequence, read N- to C-terminus: Small ribosomal subunit protein uS15 (89 aa).

It belongs to the universal ribosomal protein uS15 family. Part of the 30S ribosomal subunit. Forms a bridge to the 50S subunit in the 70S ribosome, contacting the 23S rRNA.

In terms of biological role, one of the primary rRNA binding proteins, it binds directly to 16S rRNA where it helps nucleate assembly of the platform of the 30S subunit by binding and bridging several RNA helices of the 16S rRNA. Forms an intersubunit bridge (bridge B4) with the 23S rRNA of the 50S subunit in the ribosome. In Paracoccus denitrificans (strain Pd 1222), this protein is Small ribosomal subunit protein uS15.